The chain runs to 267 residues: Pro-opiomelanocortin (267 aa).

The signal sequence occupies residues 1-26 (MPRSCCSRSGALLLALLLQASMEVRG). A disulfide bond links Cys28 and Cys50. O-linked (HexNAc...) threonine glycosylation is present at Thr71. Phe87 bears the Phenylalanine amide mark. Disordered stretches follow at residues 88-175 (GRRN…FPLE), 181-200 (TGQR…DGAG), and 222-241 (RMEH…GGFM). Asn91 is a glycosylation site (N-linked (GlcNAc...) asparagine). The span at 121-145 (PEPRSDGAKPGPREGKRSYSMEHFR) shows a compositional bias: basic and acidic residues. At Glu134 the chain carries Glutamic acid 1-amide. Ser138 bears the N-acetylserine; in Corticotropin mark. Val150 carries the post-translational modification Valine amide. Ser168 bears the Phosphoserine mark. Basic and acidic residues predominate over residues 222 to 237 (RMEHFRWGSPPKDKRY).

It belongs to the POMC family. Specific enzymatic cleavages at paired basic residues yield the different active peptides. Post-translationally, O-glycosylated; reducing sugar is probably N-acetylgalactosamine. In terms of tissue distribution, ACTH and MSH are produced by the pituitary gland.

The protein resides in the secreted. Its function is as follows. Stimulates the adrenal glands to release cortisol. Anorexigenic peptide. Increases the pigmentation of skin by increasing melanin production in melanocytes. Functionally, increases the pigmentation of skin by increasing melanin production in melanocytes. In terms of biological role, endogenous orexigenic opiate. Its function is as follows. Endogenous opiate. In Homo sapiens (Human), this protein is Pro-opiomelanocortin (POMC).